The chain runs to 84 residues: Large ribosomal subunit protein bL27 (84 aa).

The disordered stretch occupies residues 1–20 (MAHKKGGGSTKNGRDSNPKY).

This sequence belongs to the bacterial ribosomal protein bL27 family.

This chain is Large ribosomal subunit protein bL27 (rpmA), found in Prosthecochloris vibrioformis (Chlorobium vibrioforme).